A 122-amino-acid polypeptide reads, in one-letter code: UPF0102 protein Ping_1176 (122 aa).

This sequence belongs to the UPF0102 family.

The sequence is that of UPF0102 protein Ping_1176 from Psychromonas ingrahamii (strain DSM 17664 / CCUG 51855 / 37).